The sequence spans 567 residues: MDCPHQDVLHLIKYFRKEWPVVSDSERTTICGADNMLLTLQLALAEVNKQNGKEFSVSLSDVLLTWKYLVKHKLGLACEDTVVPKDYADIQKTYDLFLKNSNSLDLIDIYEKISTAGSSEAHFLSSEQLLDFLTNDVCLSEGTDFPIVSTPCKNNLDTVKVKPTLKRIFLAYLNLLVNAKNDFALAQVLNCPERGLGREAFTDLKHTSRLKNMSIFLVATSFIRTIELGGKGYAPSESDPLRKHLKGLSLFVHFIDRLNEIFGETHDPRTAGELLLSTIKMHLIKGRGSGDPLSEAATEVAQDLDLRIKYLINLVSEDKSSGTTGISPVRPKIRAINRGTASGGRETIKTLLKLLDEEAANPPSKNKADLLCADEENTLFGAFSLFTLFRSPEQTGSSPKALSQRVQKAINKDKPKLKHNLIRSQFACTYKDSNLTQTKQWDFPSMSQVPSCIHPAPKIVPVLCFDEEPLENDLQKGLKQSSGNIDLKTAEQVKNKPCKNVGNKRSKRKQVDIQSETTNGQENEPPQKKAVVELTSSKANKQGVSRNKASKNKLITGQAKLTSFFRV.

The segment at 485 to 552 (IDLKTAEQVK…GVSRNKASKN (68 aa)) is disordered. Polar residues-rich tracts occupy residues 512–524 (DIQS…QENE) and 534–552 (LTSS…ASKN).

Belongs to the PARI family.

Its subcellular location is the cytoplasm. The protein resides in the nucleus. Required to suppress inappropriate homologous recombination, thereby playing a central role DNA repair and in the maintenance of genomic stability. This Xenopus laevis (African clawed frog) protein is PCNA-interacting partner (parpbp).